A 449-amino-acid chain; its full sequence is Agmatine hydroxycinnamoyltransferase 1 (449 aa).

Catalysis depends on proton acceptor residues histidine 153 and aspartate 392.

It belongs to the plant acyltransferase family. Highly expressed in roots. Expressed at low levels in flowers.

Hydroxycinnamoyl transferase that catalyzes the transfer of an acyl from p-coumaryol-CoA to agmatine, to produce coumaroyl agmatine. Can use feruloyl-CoA, caffeoyl-CoA and sinapoyl-CoA as acyl donors. Seems to be able to transfer the acyl group from p-coumaroyl-CoA and feruloyl-CoA to the acyl acceptors putrescine and spermidine. The sequence is that of Agmatine hydroxycinnamoyltransferase 1 from Oryza sativa subsp. japonica (Rice).